A 635-amino-acid chain; its full sequence is Threonine--tRNA ligase (635 aa).

The region spanning M1 to T62 is the TGS domain. Positions D244–P535 are catalytic. C335, H386, and H512 together coordinate Zn(2+).

It belongs to the class-II aminoacyl-tRNA synthetase family. In terms of assembly, homodimer. Requires Zn(2+) as cofactor.

The protein resides in the cytoplasm. It catalyses the reaction tRNA(Thr) + L-threonine + ATP = L-threonyl-tRNA(Thr) + AMP + diphosphate + H(+). Its function is as follows. Catalyzes the attachment of threonine to tRNA(Thr) in a two-step reaction: L-threonine is first activated by ATP to form Thr-AMP and then transferred to the acceptor end of tRNA(Thr). Also edits incorrectly charged L-seryl-tRNA(Thr). This chain is Threonine--tRNA ligase, found in Xylella fastidiosa (strain M12).